The chain runs to 373 residues: MRSPQTSEKTHTMAKTLQNITDLTLQQLTGRLAEMKEPAWRAKQIHEWLFSHRAESFEEMTTLSKALRKALEETFAITPPEVEQHDNSTEGACPGPTEKLLLRLPDGAMIETVLIPGPGRLTACLSSQAGCALQCSFCATGSLGFKRNLTPGEITGQANALNSMLAASGREQKITNIVFMGMGEPLLNTLNVFDAVETLSTRGYTSSISQRKITISTVGIIPEIAKLATSGMKTKLAVSLHSAFQEKRESLMPLAARRYPLDELQPVLAHYAKNTGEPVTLVYMLLEGVNDTLEDARQLIRFASRFFCKINLIDYNSIVNIPFQSVCSETRDRFRDRLLEAGLQVTLRKSYGTSIHAACGQLAAKGMEHSNKS.

Glu111 acts as the Proton acceptor in catalysis. The 240-residue stretch at Gly117–His356 folds into the Radical SAM core domain. Cys124 and Cys359 are joined by a disulfide. Positions 131, 135, and 138 each coordinate [4Fe-4S] cluster. S-adenosyl-L-methionine-binding positions include Gly183–Glu184, Ser216, Ser239–His241, and Asn316. Cys359 serves as the catalytic S-methylcysteine intermediate.

It belongs to the radical SAM superfamily. RlmN family. [4Fe-4S] cluster serves as cofactor.

The protein resides in the cytoplasm. It carries out the reaction adenosine(2503) in 23S rRNA + 2 reduced [2Fe-2S]-[ferredoxin] + 2 S-adenosyl-L-methionine = 2-methyladenosine(2503) in 23S rRNA + 5'-deoxyadenosine + L-methionine + 2 oxidized [2Fe-2S]-[ferredoxin] + S-adenosyl-L-homocysteine. It catalyses the reaction adenosine(37) in tRNA + 2 reduced [2Fe-2S]-[ferredoxin] + 2 S-adenosyl-L-methionine = 2-methyladenosine(37) in tRNA + 5'-deoxyadenosine + L-methionine + 2 oxidized [2Fe-2S]-[ferredoxin] + S-adenosyl-L-homocysteine. Functionally, specifically methylates position 2 of adenine 2503 in 23S rRNA and position 2 of adenine 37 in tRNAs. This Chlorobium phaeovibrioides (strain DSM 265 / 1930) (Prosthecochloris vibrioformis (strain DSM 265)) protein is Probable dual-specificity RNA methyltransferase RlmN.